A 119-amino-acid polypeptide reads, in one-letter code: Ribonuclease P protein component (119 aa).

Belongs to the RnpA family. Consists of a catalytic RNA component (M1 or rnpB) and a protein subunit.

The catalysed reaction is Endonucleolytic cleavage of RNA, removing 5'-extranucleotides from tRNA precursor.. In terms of biological role, RNaseP catalyzes the removal of the 5'-leader sequence from pre-tRNA to produce the mature 5'-terminus. It can also cleave other RNA substrates such as 4.5S RNA. The protein component plays an auxiliary but essential role in vivo by binding to the 5'-leader sequence and broadening the substrate specificity of the ribozyme. The sequence is that of Ribonuclease P protein component from Erwinia tasmaniensis (strain DSM 17950 / CFBP 7177 / CIP 109463 / NCPPB 4357 / Et1/99).